A 228-amino-acid polypeptide reads, in one-letter code: Ribosomal RNA small subunit methyltransferase G (228 aa).

S-adenosyl-L-methionine-binding positions include Gly70, 121 to 122 (AE), and Arg138.

Belongs to the methyltransferase superfamily. RNA methyltransferase RsmG family.

It is found in the cytoplasm. Its function is as follows. Specifically methylates the N7 position of a guanine in 16S rRNA. In Thermotoga sp. (strain RQ2), this protein is Ribosomal RNA small subunit methyltransferase G.